A 242-amino-acid polypeptide reads, in one-letter code: Lysosomal membrane ascorbate-dependent ferrireductase CYB561A3 (242 aa).

The Cytoplasmic portion of the chain corresponds to 1 to 4 (MASG). The helical transmembrane segment at 5–25 (WFYLSCMVLGSLGSMCILFTA) threads the bilayer. Positions 12–219 (VLGSLGSMCI…FGLLVLYVLL (208 aa)) constitute a Cytochrome b561 domain. At 26–40 (YWMQYWRGGFAWDGT) the chain is on the lumenal side. The chain crosses the membrane as a helical span at residues 41–61 (VLMFNWHPVLMVAGMVVLYGA). The heme b site is built by histidine 47 and arginine 67. The Cytoplasmic portion of the chain corresponds to 62–81 (ASLVYRLPSSWVGPRLPWKV). L-ascorbate is bound by residues arginine 76 and lysine 80. The helical transmembrane segment at 82-102 (LHAALHLLAFTCTVVGLIAVF) threads the bilayer. Heme b-binding positions include histidine 83, 112 to 115 (HLYS), and histidine 117. Topologically, residues 103–119 (RFHNHSRIAHLYSLHSW) are lumenal. Residues 120–140 (LGITTVVLFACQWFLGFAVFL) form a helical membrane-spanning segment. The Cytoplasmic segment spans residues 141–154 (LPWASQWLRSLLKP). Residue arginine 149 participates in L-ascorbate binding. The chain crosses the membrane as a helical span at residues 155 to 175 (LHVFFGACILSLSITSVISGI). Residues histidine 156 and glutamate 177 each coordinate heme b. Over 176-202 (NEKLFFVLKNATKPYSSLPGEAVFANS) the chain is Lumenal. Residues 203–223 (TGLLVVAFGLLVLYVLLASSW) form a helical membrane-spanning segment. Lysine 224 is a binding site for heme b. At 224–242 (KRPDPGALTDRQPLLHDRE) the chain is on the cytoplasmic side.

In terms of assembly, homodimer. It depends on heme b as a cofactor. Post-translationally, N-glycosylated. In terms of tissue distribution, present in lung, spleen, thymus and testis. Present at low level in brain, heart, liver and kidney. Expressed in the alveolar macrophages of the lung, in the white pulp of the spleen, widespread in the thymus, and in the Sertoli cells of the testis (at protein level).

It is found in the late endosome membrane. The protein resides in the lysosome membrane. The enzyme catalyses Fe(3+)(out) + L-ascorbate(in) = monodehydro-L-ascorbate radical(in) + Fe(2+)(out) + H(+). Functionally, transmembrane reductase that uses ascorbate as an electron donor in the cytoplasm and transfers electrons across membranes to reduce iron cations Fe(3+) into Fe(2+) in the lumen of the late endosome and lysosome. Reduced iron can then be extruded from the late endosome and lysosome to the cytoplasm by divalent metal-specific transporters. It is therefore most probably involved in endosomal and lysosomal cellular iron homeostasis. The chain is Lysosomal membrane ascorbate-dependent ferrireductase CYB561A3 from Mus musculus (Mouse).